The sequence spans 280 residues: 2-dehydro-3-deoxyphosphooctonate aldolase (280 aa).

It belongs to the KdsA family.

Its subcellular location is the cytoplasm. The catalysed reaction is D-arabinose 5-phosphate + phosphoenolpyruvate + H2O = 3-deoxy-alpha-D-manno-2-octulosonate-8-phosphate + phosphate. It functions in the pathway carbohydrate biosynthesis; 3-deoxy-D-manno-octulosonate biosynthesis; 3-deoxy-D-manno-octulosonate from D-ribulose 5-phosphate: step 2/3. The protein operates within bacterial outer membrane biogenesis; lipopolysaccharide biosynthesis. The protein is 2-dehydro-3-deoxyphosphooctonate aldolase of Neisseria gonorrhoeae (strain NCCP11945).